The primary structure comprises 353 residues: Regulatory protein ada (353 aa).

Thr-34 contacts DNA. The active-site Nucleophile; methyl group acceptor from phosphotriester is the Cys-38. Residues Cys-38 and Cys-42 each contribute to the Zn(2+) site. DNA is bound by residues Arg-43 and Arg-67. Positions 69 and 72 each coordinate Zn(2+). The 90-residue stretch at 94-183 (LEQETPVTLA…GMTAKQFRKG (90 aa)) folds into the HTH araC/xylS-type domain. 2 consecutive DNA-binding regions (H-T-H motif) follow at residues 103 to 124 (AFLAQAVAMSPFHLHRLFKAST) and 150 to 173 (ITAAIYRAGFPDSSSYYRHADQTL). The active-site Nucleophile; methyl group acceptor is the Cys-321.

It in the C-terminal section; belongs to the MGMT family. Requires Zn(2+) as cofactor.

The catalysed reaction is a 6-O-methyl-2'-deoxyguanosine in DNA + L-cysteinyl-[protein] = S-methyl-L-cysteinyl-[protein] + a 2'-deoxyguanosine in DNA. The enzyme catalyses a 4-O-methyl-thymidine in DNA + L-cysteinyl-[protein] = a thymidine in DNA + S-methyl-L-cysteinyl-[protein]. Its function is as follows. Involved in the cellular defense against the biological effects of O6-methylguanine (O6-MeG) and O4-methylthymine (O4-MeT) in DNA. Repairs the methylated nucleobase in DNA by stoichiometrically transferring the methyl group to a cysteine residue in the enzyme. This is a suicide reaction: the enzyme is irreversibly inactivated. The methylated ADA protein acts as a positive regulator of its own synthesis, as well as that of other proteins. The transcription-activating function of the ADA protein resides in its N-terminus. It activates the transcription of alkA, alkB and aidB. This Salmonella typhimurium (strain LT2 / SGSC1412 / ATCC 700720) protein is Regulatory protein ada (ada).